A 266-amino-acid chain; its full sequence is Proteasome subunit beta type-7 (266 aa).

Positions 1–33 (MNHDPFSWGRPADSTYGAYNTQIANAGASPMVN) are excised as a propeptide.

Belongs to the peptidase T1B family. The 26S proteasome consists of a 20S proteasome core and two 19S regulatory subunits. The 20S proteasome core is composed of 28 subunits that are arranged in four stacked rings, resulting in a barrel-shaped structure. The two end rings are each formed by seven alpha subunits, and the two central rings are each formed by seven beta subunits. The catalytic chamber with the active sites is on the inside of the barrel. Interacts with CIC1.

The protein resides in the cytoplasm. It localises to the nucleus. Non-catalytic component of the proteasome which degrades poly-ubiquitinated proteins in the cytoplasm and in the nucleus. It is essential for the regulated turnover of proteins and for the removal of misfolded proteins. The proteasome is a multicatalytic proteinase complex that is characterized by its ability to cleave peptides with Arg, Phe, Tyr, Leu, and Glu adjacent to the leaving group at neutral or slightly basic pH. It has an ATP-dependent proteolytic activity. PRE3 and PRE4 are necessary for the peptidyl-glutamyl-peptide-hydrolyzing activity. In Saccharomyces cerevisiae (strain ATCC 204508 / S288c) (Baker's yeast), this protein is Proteasome subunit beta type-7 (PRE4).